We begin with the raw amino-acid sequence, 605 residues long: Glutamine--fructose-6-phosphate aminotransferase [isomerizing] (605 aa).

The active-site Nucleophile; for GATase activity is the cysteine 2. One can recognise a Glutamine amidotransferase type-2 domain in the interval cysteine 2–aspartate 219. 2 SIS domains span residues isoleucine 285–glutamate 424 and valine 457–proline 595. Lysine 600 (for Fru-6P isomerization activity) is an active-site residue.

Homodimer.

The protein resides in the cytoplasm. The enzyme catalyses D-fructose 6-phosphate + L-glutamine = D-glucosamine 6-phosphate + L-glutamate. Catalyzes the first step in hexosamine metabolism, converting fructose-6P into glucosamine-6P using glutamine as a nitrogen source. The protein is Glutamine--fructose-6-phosphate aminotransferase [isomerizing] of Lactococcus lactis subsp. lactis (strain IL1403) (Streptococcus lactis).